Here is a 366-residue protein sequence, read N- to C-terminus: tRNA/tmRNA (uracil-C(5))-methyltransferase (366 aa).

Residues Q190, Y218, N223, E239, and D299 each coordinate S-adenosyl-L-methionine. C324 serves as the catalytic Nucleophile. The Proton acceptor role is filled by E358.

It belongs to the class I-like SAM-binding methyltransferase superfamily. RNA M5U methyltransferase family. TrmA subfamily.

The catalysed reaction is uridine(54) in tRNA + S-adenosyl-L-methionine = 5-methyluridine(54) in tRNA + S-adenosyl-L-homocysteine + H(+). It carries out the reaction uridine(341) in tmRNA + S-adenosyl-L-methionine = 5-methyluridine(341) in tmRNA + S-adenosyl-L-homocysteine + H(+). Functionally, dual-specificity methyltransferase that catalyzes the formation of 5-methyluridine at position 54 (m5U54) in all tRNAs, and that of position 341 (m5U341) in tmRNA (transfer-mRNA). The chain is tRNA/tmRNA (uracil-C(5))-methyltransferase from Salmonella choleraesuis (strain SC-B67).